The chain runs to 300 residues: Acetaldehyde dehydrogenase (300 aa).

Residue 10-13 (SGNI) coordinates NAD(+). Catalysis depends on C129, which acts as the Acyl-thioester intermediate. Residues 160 to 168 (SAGPGTRKN) and N271 contribute to the NAD(+) site.

This sequence belongs to the acetaldehyde dehydrogenase family.

It carries out the reaction acetaldehyde + NAD(+) + CoA = acetyl-CoA + NADH + H(+). The sequence is that of Acetaldehyde dehydrogenase from Alkalilimnicola ehrlichii (strain ATCC BAA-1101 / DSM 17681 / MLHE-1).